The primary structure comprises 43 residues: uncharacterized protein (43 aa).

The signal sequence occupies residues methionine 1–serine 22.

This is an uncharacterized protein from Schizosaccharomyces pombe (strain 972 / ATCC 24843) (Fission yeast).